The following is a 621-amino-acid chain: Kelch-like protein 6 (621 aa).

The BTB domain maps to 72 to 139 (TDVILCVDIQ…TYTSKALITK (68 aa)). Residues 174 to 276 (CVGILRLADT…DPWYFVETVE (103 aa)) form the BACK domain. Kelch repeat units follow at residues 320–367 (VFMI…NKKW), 378–421 (EVYI…VLGG), 422–468 (KVYV…SHKK), 470–516 (LYVI…SFRD), 517–558 (RIYV…PCNN), and 560–606 (LYIT…TIRK).

In terms of tissue distribution, found in germinal center B-cells.

Functionally, involved in B-lymphocyte antigen receptor signaling and germinal center formation. The sequence is that of Kelch-like protein 6 (KLHL6) from Homo sapiens (Human).